Reading from the N-terminus, the 205-residue chain is Pyrrolidone-carboxylate peptidase (205 aa).

Active-site residues include Glu-78, Cys-141, and His-165.

The protein belongs to the peptidase C15 family. As to quaternary structure, homotetramer.

The protein resides in the cytoplasm. The catalysed reaction is Release of an N-terminal pyroglutamyl group from a polypeptide, the second amino acid generally not being Pro.. Its function is as follows. Removes 5-oxoproline from various penultimate amino acid residues except L-proline. The sequence is that of Pyrrolidone-carboxylate peptidase from Thermosipho africanus (strain TCF52B).